The following is a 144-amino-acid chain: Large ribosomal subunit protein uL14 (144 aa).

Belongs to the universal ribosomal protein uL14 family. As to quaternary structure, part of the 50S ribosomal subunit. Forms a cluster with proteins L3 and L24e, part of which may contact the 16S rRNA in 2 intersubunit bridges.

Functionally, binds to 23S rRNA. Forms part of two intersubunit bridges in the 70S ribosome. In Pyrobaculum aerophilum (strain ATCC 51768 / DSM 7523 / JCM 9630 / CIP 104966 / NBRC 100827 / IM2), this protein is Large ribosomal subunit protein uL14.